We begin with the raw amino-acid sequence, 728 residues long: Catalase-peroxidase (728 aa).

Positions 97–225 form a cross-link, tryptophyl-tyrosyl-methioninium (Trp-Tyr) (with M-251); sequence WHSAGTYRIA…LAAVMMGLIY (129 aa). The Proton acceptor role is filled by His98. Residues 225-251 constitute a cross-link (tryptophyl-tyrosyl-methioninium (Tyr-Met) (with W-97)); it reads YVNPEGVDGNPDPLRTAQDIRITFARM. His266 contacts heme b.

It belongs to the peroxidase family. Peroxidase/catalase subfamily. As to quaternary structure, homodimer or homotetramer. Requires heme b as cofactor. In terms of processing, formation of the three residue Trp-Tyr-Met cross-link is important for the catalase, but not the peroxidase activity of the enzyme.

It carries out the reaction H2O2 + AH2 = A + 2 H2O. The catalysed reaction is 2 H2O2 = O2 + 2 H2O. Bifunctional enzyme with both catalase and broad-spectrum peroxidase activity. The protein is Catalase-peroxidase of Shewanella putrefaciens (strain CN-32 / ATCC BAA-453).